We begin with the raw amino-acid sequence, 330 residues long: Aspartate--ammonia ligase (330 aa).

This sequence belongs to the class-II aminoacyl-tRNA synthetase family. AsnA subfamily.

Its subcellular location is the cytoplasm. The enzyme catalyses L-aspartate + NH4(+) + ATP = L-asparagine + AMP + diphosphate + H(+). It participates in amino-acid biosynthesis; L-asparagine biosynthesis; L-asparagine from L-aspartate (ammonia route): step 1/1. This is Aspartate--ammonia ligase from Streptococcus agalactiae serotype III (strain NEM316).